The following is a 149-amino-acid chain: Large ribosomal subunit protein bL9 (149 aa).

The protein belongs to the bacterial ribosomal protein bL9 family.

Binds to the 23S rRNA. The sequence is that of Large ribosomal subunit protein bL9 from Aquifex aeolicus (strain VF5).